We begin with the raw amino-acid sequence, 67 residues long: Protein Tpau_2998 (67 aa).

This Tsukamurella paurometabola (strain ATCC 8368 / DSM 20162 / CCUG 35730 / CIP 100753 / JCM 10117 / KCTC 9821 / NBRC 16120 / NCIMB 702349 / NCTC 13040) (Corynebacterium paurometabolum) protein is Protein Tpau_2998.